The chain runs to 339 residues: Cathepsin B (339 aa).

The first 17 residues, 1-17, serve as a signal peptide directing secretion; sequence MWWLWASLCCLLALGDA. The propeptide at 18–79 is activation peptide; sequence RSRPSFHPLS…QRVMFTEDLK (62 aa). 6 disulfide bridges follow: Cys93–Cys122, Cys105–Cys150, Cys141–Cys207, Cys142–Cys146, Cys179–Cys211, and Cys187–Cys198. Residue Cys108 is part of the active site. N-linked (GlcNAc...) asparagine glycosylation is present at Asn192. Lys220 is subject to N6-acetyllysine. Residues His278 and Asn298 contribute to the active site. A propeptide spanning residues 334–339 is cleaved from the precursor; sequence QYWEKI.

The protein belongs to the peptidase C1 family. As to quaternary structure, dimer of a heavy chain and a light chain cross-linked by a disulfide bond. Interacts with SRPX2. Directly interacts with SHKBP1.

It is found in the lysosome. Its subcellular location is the melanosome. The protein localises to the secreted. It localises to the extracellular space. The protein resides in the apical cell membrane. It carries out the reaction Hydrolysis of proteins with broad specificity for peptide bonds. Preferentially cleaves -Arg-Arg-|-Xaa bonds in small molecule substrates (thus differing from cathepsin L). In addition to being an endopeptidase, shows peptidyl-dipeptidase activity, liberating C-terminal dipeptides.. In terms of biological role, thiol protease which is believed to participate in intracellular degradation and turnover of proteins. Cleaves matrix extracellular phosphoglycoprotein MEPE. Involved in the solubilization of cross-linked TG/thyroglobulin in the thyroid follicle lumen. Has also been implicated in tumor invasion and metastasis. This is Cathepsin B (CTSB) from Macaca fascicularis (Crab-eating macaque).